A 251-amino-acid polypeptide reads, in one-letter code: MSSIDKKELAKFEKISHNWWNKDGEFGLLHRINPIRLEYIIEKITAHYNRHLSKLEILDVGCGGGLIAMPLAAQGFNVTAIDALQSNIETASTYAKENNVKINYLQSTIEELESDKLYDVVICIEVIEHVGNVQQFILNLVKHIKPNGMAIISTINRTKKAYALGIIVAEYILGWVPKNTHDYTKFLKPSEIYEMLTDTDIEIKELKGLVYDPAKNEWKLSDDIDVNYFMCLGSKNAKSINVIPALAGMTS.

Residues Arg36, Gly61, Asp82, and Ile124 each contribute to the S-adenosyl-L-methionine site.

Belongs to the methyltransferase superfamily. UbiG/COQ3 family.

It carries out the reaction a 3-demethylubiquinol + S-adenosyl-L-methionine = a ubiquinol + S-adenosyl-L-homocysteine + H(+). It catalyses the reaction a 3-(all-trans-polyprenyl)benzene-1,2-diol + S-adenosyl-L-methionine = a 2-methoxy-6-(all-trans-polyprenyl)phenol + S-adenosyl-L-homocysteine + H(+). It participates in cofactor biosynthesis; ubiquinone biosynthesis. O-methyltransferase that catalyzes the 2 O-methylation steps in the ubiquinone biosynthetic pathway. The sequence is that of Ubiquinone biosynthesis O-methyltransferase from Rickettsia akari (strain Hartford).